A 366-amino-acid polypeptide reads, in one-letter code: Erythronate-4-phosphate dehydrogenase (366 aa).

2 residues coordinate substrate: serine 46 and threonine 67. The NAD(+) site is built by aspartate 147 and threonine 175. Arginine 208 is a catalytic residue. NAD(+) is bound at residue aspartate 228. Glutamate 233 is an active-site residue. Catalysis depends on histidine 250, which acts as the Proton donor. Glycine 253 provides a ligand contact to NAD(+). A substrate-binding site is contributed by tyrosine 254.

The protein belongs to the D-isomer specific 2-hydroxyacid dehydrogenase family. PdxB subfamily. In terms of assembly, homodimer.

It localises to the cytoplasm. The catalysed reaction is 4-phospho-D-erythronate + NAD(+) = (R)-3-hydroxy-2-oxo-4-phosphooxybutanoate + NADH + H(+). The protein operates within cofactor biosynthesis; pyridoxine 5'-phosphate biosynthesis; pyridoxine 5'-phosphate from D-erythrose 4-phosphate: step 2/5. Catalyzes the oxidation of erythronate-4-phosphate to 3-hydroxy-2-oxo-4-phosphonooxybutanoate. The protein is Erythronate-4-phosphate dehydrogenase of Coxiella burnetii (strain Dugway 5J108-111).